The sequence spans 64 residues: MAHPKRKTSKTRRDKRRTHYKATVAQIATCPITGEAHLYHRAYWHEGKMYYRGQVVIDKSEAVA.

The protein belongs to the bacterial ribosomal protein bL32 family.

In Flavobacterium johnsoniae (strain ATCC 17061 / DSM 2064 / JCM 8514 / BCRC 14874 / CCUG 350202 / NBRC 14942 / NCIMB 11054 / UW101) (Cytophaga johnsonae), this protein is Large ribosomal subunit protein bL32.